The sequence spans 78 residues: Acyl carrier protein (78 aa).

The Carrier domain occupies 1 to 75 (MIKEKILSIV…DLISVVKNST (75 aa)). O-(pantetheine 4'-phosphoryl)serine is present on serine 35.

It belongs to the acyl carrier protein (ACP) family. Post-translationally, 4'-phosphopantetheine is transferred from CoA to a specific serine of apo-ACP by AcpS. This modification is essential for activity because fatty acids are bound in thioester linkage to the sulfhydryl of the prosthetic group.

It is found in the cytoplasm. The protein operates within lipid metabolism; fatty acid biosynthesis. Functionally, carrier of the growing fatty acid chain in fatty acid biosynthesis. This Shigella flexneri protein is Acyl carrier protein (acpP).